Here is a 288-residue protein sequence, read N- to C-terminus: MTTAAKVILACCLLGAFHIQISSSSAIPIWEFLTRNEKMSHLYSTFAQLVSVHCKSTAAVGGLPVNQCKHNLLGYGSAKLQTLSDVQLEALDPYQRDANELIWSSIMGDHPSGASLVTTRQPLQQPLPTPPASSLIILTRQQLPHGASHAHPIQSSGSATNPIFESGEQKHKYAMDMDKAYGYGPQSSSELPMAAALTSEPSKRFLTGPLVIRVRPDGSPVEEDKMMPLPRDEDLPYFHLGLAAAQPNRHRKIATISSLKQQHFASILQSDLQPPHQTQRRLFRQQQA.

In terms of tissue distribution, expressed in head, but not in the body. Expression levels oscillate with the circadian rhythm.

Functionally, involved in the generation of biological rhythms (Potential). In the head, oscillates in abundance with a daily peak during early night, even under constant darkness. Oscillation is dependent on period (per) function. The chain is Rhythmically expressed gene 5 protein (Reg-5) from Drosophila melanogaster (Fruit fly).